The following is a 393-amino-acid chain: Homoserine O-succinyltransferase (393 aa).

The AB hydrolase-1 domain occupies 62–372 (NAVLVCHALN…PHGHDAFLLD (311 aa)). Serine 168 (nucleophile) is an active-site residue. Arginine 238 provides a ligand contact to substrate. Active-site residues include aspartate 333 and histidine 366. Aspartate 367 is a substrate binding site.

The protein belongs to the AB hydrolase superfamily. MetX family. In terms of assembly, homodimer.

It localises to the cytoplasm. It catalyses the reaction L-homoserine + succinyl-CoA = O-succinyl-L-homoserine + CoA. The protein operates within amino-acid biosynthesis; L-methionine biosynthesis via de novo pathway; O-succinyl-L-homoserine from L-homoserine: step 1/1. Functionally, transfers a succinyl group from succinyl-CoA to L-homoserine, forming succinyl-L-homoserine. This is Homoserine O-succinyltransferase from Cupriavidus necator (strain ATCC 17699 / DSM 428 / KCTC 22496 / NCIMB 10442 / H16 / Stanier 337) (Ralstonia eutropha).